Reading from the N-terminus, the 610-residue chain is MTDLFDYKEFLKTVTSQPGVYRMYDTAGTVIYVGKAKDLKKRLTSYFRAQVANRKTETLVKNIAQIDVTVTHTETEALLLEHNYIKLYQPRYNVLLRDDKSYPLIFLSADEHPRLAVHRGAKHEKGEYFGPFPNSYAVRETLALLQKLFPVRQCENSVYRNRSRPCLQYQIGRCSGPCVEGLVSEEEYQRQVDYVRLFLSGKDQQVLTQLITRMEEASQQLHFEDAARIRDQIQAVRRVTEQQFVSGDSEDLDVIGVAFDAGLACVHVLFIRLGKVLGSRSYFPKVPAGTELSEVVQTFVGQFYLQGSQGRTLPGEILLDFTLTEKDLLASSLSELAGRKIQIQSRPRGDRARYLKLARTNASTALITRLSQQSTIHQRMKELAKVLKLDEINRMECFDISHTMGEQTVASCVVFDANGPVRSEYRRYNISGITPGDDYAAMAQVLKRRYGKALDDQKIPDVIFIDGGKGQLSQAFDVFASLNVPWDKQKPLLVGVAKGSDRKAGLETLFLASEGEGFSLPPDSPALHLIQHIRDDSHNHAITGHRQRRSKVKNTSALEMIEGVGPKRRQALLKYMGGLQPLFNASVEEIAKVPGISQALAEKIHNALKH.

Residues 16–94 (SQPGVYRMYD…IKLYQPRYNV (79 aa)) enclose the GIY-YIG domain. One can recognise a UVR domain in the interval 204–239 (QQVLTQLITRMEEASQQLHFEDAARIRDQIQAVRRV).

It belongs to the UvrC family. Interacts with UvrB in an incision complex.

It is found in the cytoplasm. In terms of biological role, the UvrABC repair system catalyzes the recognition and processing of DNA lesions. UvrC both incises the 5' and 3' sides of the lesion. The N-terminal half is responsible for the 3' incision and the C-terminal half is responsible for the 5' incision. This Yersinia pseudotuberculosis serotype I (strain IP32953) protein is UvrABC system protein C.